The following is a 528-amino-acid chain: Galactokinase (528 aa).

4 residues coordinate alpha-D-galactose: arginine 53, glutamate 59, histidine 60, and aspartate 62. ATP-binding residues include glycine 165, glycine 167, serine 169, and serine 170. Positions 213 and 217 each coordinate alpha-D-galactose. Residue aspartate 217 is the Proton acceptor of the active site. Serine 264, asparagine 265, and lysine 266 together coordinate ATP. Tyrosine 274 provides a ligand contact to alpha-D-galactose. A Phosphoserine modification is found at serine 381.

Belongs to the GHMP kinase family. GalK subfamily.

The enzyme catalyses alpha-D-galactose + ATP = alpha-D-galactose 1-phosphate + ADP + H(+). It functions in the pathway carbohydrate metabolism; galactose metabolism. Galactokinase is a key enzyme in the galactose metabolism where it catalyzes the conversion of alpha-D-galactose to galactose 1-phosphate. Can also induce the transcription of the yeast GAL genes in response to the organism being challenged with galactose as the sole source of carbon. It's striking amino acid sequence similarity to GAL3 might explain its GAL3-like induction activity. The chain is Galactokinase from Saccharomyces cerevisiae (strain ATCC 204508 / S288c) (Baker's yeast).